Consider the following 181-residue polypeptide: Ribonuclease HII (181 aa).

One can recognise an RNase H type-2 domain in the interval 1–181 (MICGIDEVGR…SLHRKSFQLI (181 aa)). Asp-6, Glu-7, and Asp-98 together coordinate a divalent metal cation.

Belongs to the RNase HII family. The cofactor is Mn(2+). Mg(2+) is required as a cofactor.

It localises to the cytoplasm. The catalysed reaction is Endonucleolytic cleavage to 5'-phosphomonoester.. Endonuclease that specifically degrades the RNA of RNA-DNA hybrids. The chain is Ribonuclease HII from Borrelia duttonii (strain Ly).